Reading from the N-terminus, the 267-residue chain is Eukaryotic translation initiation factor 3 subunit J (267 aa).

Disordered stretches follow at residues 1-128 (MAPS…DIDL) and 220-241 (KMRE…KTKV). The span at 28-46 (DEEEEDVLDSWDAAEDSEV) shows a compositional bias: acidic residues. The stretch at 44–96 (SEVEREKAAKAAAAAAKAEAEAAAKKKSKAQRIEEHKQERKKQAEANESDEDS) forms a coiled coil. The segment covering 74–88 (QRIEEHKQERKKQAE) has biased composition (basic and acidic residues). The span at 90–100 (NESDEDSDEDE) shows a compositional bias: acidic residues. Composition is skewed to basic and acidic residues over residues 108–121 (RRTE…HAQD) and 220–231 (KMREERAADKGN).

The protein belongs to the eIF-3 subunit J family. In terms of assembly, component of the eukaryotic translation initiation factor 3 (eIF-3) complex.

The protein localises to the cytoplasm. Component of the eukaryotic translation initiation factor 3 (eIF-3) complex, which is involved in protein synthesis of a specialized repertoire of mRNAs and, together with other initiation factors, stimulates binding of mRNA and methionyl-tRNAi to the 40S ribosome. The eIF-3 complex specifically targets and initiates translation of a subset of mRNAs involved in cell proliferation. In Neosartorya fischeri (strain ATCC 1020 / DSM 3700 / CBS 544.65 / FGSC A1164 / JCM 1740 / NRRL 181 / WB 181) (Aspergillus fischerianus), this protein is Eukaryotic translation initiation factor 3 subunit J (hcr1).